The primary structure comprises 389 residues: Geodin cluster transcriptional coactivator gedD (389 aa).

One can recognise an HTH iclR-type domain in the interval 13–83 (LAWHVQLLAC…QPGQIMHTPL (71 aa)). The H-T-H motif DNA-binding region spans 43–62 (VRDLAQLCGVSETTLSRVVR).

It localises to the nucleus. Functionally, transcriptional coactivator; part of the gene cluster that mediates the biosynthesis of geodin, an intermediate in the biosynthesis of other natural products. With gedR, coregulates the production of geodin. The sequence is that of Geodin cluster transcriptional coactivator gedD (gedD) from Aspergillus terreus (strain NIH 2624 / FGSC A1156).